Consider the following 64-residue polypeptide: MSRICQITGKGPMVGNNVSHANNKTKRRFLPNLRTVRITLEDGTTRKVRVAASTLRTLKKQSSK.

The protein belongs to the bacterial ribosomal protein bL28 family.

The polypeptide is Large ribosomal subunit protein bL28 (Campylobacter lari (strain RM2100 / D67 / ATCC BAA-1060)).